Here is a 120-residue protein sequence, read N- to C-terminus: NAD(P)H-quinone oxidoreductase subunit 3 (120 aa).

A run of 3 helical transmembrane segments spans residues 6 to 26 (GYDA…LALV), 64 to 84 (MFAL…PWAV), and 89 to 109 (LGLL…VALA).

The protein belongs to the complex I subunit 3 family. As to quaternary structure, NDH-1 can be composed of about 15 different subunits; different subcomplexes with different compositions have been identified which probably have different functions.

It is found in the cellular thylakoid membrane. The catalysed reaction is a plastoquinone + NADH + (n+1) H(+)(in) = a plastoquinol + NAD(+) + n H(+)(out). The enzyme catalyses a plastoquinone + NADPH + (n+1) H(+)(in) = a plastoquinol + NADP(+) + n H(+)(out). NDH-1 shuttles electrons from an unknown electron donor, via FMN and iron-sulfur (Fe-S) centers, to quinones in the respiratory and/or the photosynthetic chain. The immediate electron acceptor for the enzyme in this species is believed to be plastoquinone. Couples the redox reaction to proton translocation, and thus conserves the redox energy in a proton gradient. Cyanobacterial NDH-1 also plays a role in inorganic carbon-concentration. The chain is NAD(P)H-quinone oxidoreductase subunit 3 from Synechococcus sp. (strain CC9902).